A 255-amino-acid polypeptide reads, in one-letter code: Vitamin B12 import ATP-binding protein BtuD (255 aa).

Positions 2-240 constitute an ABC transporter domain; that stretch reads MRVKHIAVGS…AGLAEVFKTQ (239 aa). 30 to 37 serves as a coordination point for ATP; the sequence is GPNGSGKS.

The protein belongs to the ABC transporter superfamily. Vitamin B12 importer (TC 3.A.1.13.1) family. As to quaternary structure, the complex is composed of two ATP-binding proteins (BtuD), two transmembrane proteins (BtuC) and a solute-binding protein (BtuF).

The protein resides in the cell inner membrane. The catalysed reaction is an R-cob(III)alamin(out) + ATP + H2O = an R-cob(III)alamin(in) + ADP + phosphate + H(+). Its function is as follows. Part of the ABC transporter complex BtuCDF involved in vitamin B12 import. Responsible for energy coupling to the transport system. In Vibrio parahaemolyticus serotype O3:K6 (strain RIMD 2210633), this protein is Vitamin B12 import ATP-binding protein BtuD.